A 175-amino-acid polypeptide reads, in one-letter code: Ribulose bisphosphate carboxylase small subunit, chloroplastic (175 aa).

The N-terminal 34 residues, M1–R34, are a transit peptide targeting the chloroplast.

Belongs to the RuBisCO small chain family. Heterohexadecamer of 8 large and 8 small subunits.

It is found in the plastid. Its subcellular location is the chloroplast. Its function is as follows. RuBisCO catalyzes two reactions: the carboxylation of D-ribulose 1,5-bisphosphate, the primary event in carbon dioxide fixation, as well as the oxidative fragmentation of the pentose substrate. Both reactions occur simultaneously and in competition at the same active site. Although the small subunit is not catalytic it is essential for maximal activity. This is Ribulose bisphosphate carboxylase small subunit, chloroplastic from Batophora oerstedii (Green alga).